The primary structure comprises 107 residues: U1-lycotoxin-Ls1i (107 aa).

An N-terminal signal peptide occupies residues 1–20 (MMKVLVVVALLVTLISYSSS). Positions 21-41 (EGIDDLEADELLSLMANEQTR) are excised as a propeptide. Disulfide bonds link C44–C59, C51–C68, C58–C86, and C70–C84.

This sequence belongs to the neurotoxin 19 (CSTX) family. 04 (U1-Lctx) subfamily. Expressed by the venom gland.

It localises to the secreted. This Lycosa singoriensis (Wolf spider) protein is U1-lycotoxin-Ls1i.